Here is a 397-residue protein sequence, read N- to C-terminus: Elongation factor Tu (397 aa).

A tr-type G domain is found at 10–206; it reads KPHVNIGTIG…AVDTSIPQPE (197 aa). Residues 19-26 form a G1 region; that stretch reads GHIDHGKT. Residue 19–26 participates in GTP binding; the sequence is GHIDHGKT. Threonine 26 contributes to the Mg(2+) binding site. The segment at 62 to 66 is G2; that stretch reads GITIS. The interval 83–86 is G3; it reads DCPG. GTP-binding positions include 83–87 and 138–141; these read DCPGH and NKSD. The interval 138 to 141 is G4; the sequence is NKSD. Positions 176-178 are G5; that stretch reads SAL.

Belongs to the TRAFAC class translation factor GTPase superfamily. Classic translation factor GTPase family. EF-Tu/EF-1A subfamily. As to quaternary structure, monomer.

It localises to the cytoplasm. It catalyses the reaction GTP + H2O = GDP + phosphate + H(+). GTP hydrolase that promotes the GTP-dependent binding of aminoacyl-tRNA to the A-site of ribosomes during protein biosynthesis. The polypeptide is Elongation factor Tu (Salinispora arenicola (strain CNS-205)).